Reading from the N-terminus, the 233-residue chain is Inner kinetochore subunit fta4 (233 aa).

Phosphothreonine is present on residues Thr189 and Thr191.

It belongs to the NKP1 family. Component of the inner kinetochore constitutive centromere-associated network (CCAN) (also known as central kinetochore Sim4 complex in fission yeast), which is composed of at least cnl2, cnp3, cnp20, fta1, fta2, fta3, fta4, fta6, fta7, mal2, mhf1, mhf2, mis6, mis15, mis17, sim4 and wip1.

It localises to the nucleus. The protein localises to the chromosome. The protein resides in the centromere. It is found in the kinetochore. Component of the kinetochore, a multiprotein complex that assembles on centromeric DNA and attaches chromosomes to spindle microtubules, mediating chromosome segregation and sister chromatid segregation during meiosis and mitosis. Component of the inner kinetochore constitutive centromere-associated network (CCAN), which serves as a structural platform for outer kinetochore assembly. Fta2, fta3 and fta4 associate with the central core (cnt) and inner repeat (inr) region of the centromere. This chain is Inner kinetochore subunit fta4 (fta4), found in Schizosaccharomyces pombe (strain 972 / ATCC 24843) (Fission yeast).